We begin with the raw amino-acid sequence, 147 residues long: MADFDMVLKCWGPMEADYATHGGLVLTRLFTEHPETLKLFPKFAGIAHGDLAGDAGVSAHGATVLNKLGDLLKARGAHAALLKPLSSSHATKHKIPIINFKLIAEVIGKVMEEKAGLDAAGQTALRNVMAVIIADMEADYKELGFTE.

The region spanning 2-141 (ADFDMVLKCW…IIADMEADYK (140 aa)) is the Globin domain. Position 60 (histidine 60) interacts with nitrite. O2 is bound at residue histidine 60. Histidine 89 contacts heme b.

Belongs to the globin family. In terms of assembly, monomeric.

The protein localises to the cytoplasm. The protein resides in the sarcoplasm. It catalyses the reaction Fe(III)-heme b-[protein] + nitric oxide + H2O = Fe(II)-heme b-[protein] + nitrite + 2 H(+). The enzyme catalyses H2O2 + AH2 = A + 2 H2O. Its function is as follows. Monomeric heme protein which primary function is to store oxygen and facilitate its diffusion within muscle tissues. Reversibly binds oxygen through a pentacoordinated heme iron and enables its timely and efficient release as needed during periods of heightened demand. Depending on the oxidative conditions of tissues and cells, and in addition to its ability to bind oxygen, it also has a nitrite reductase activity whereby it regulates the production of bioactive nitric oxide. Under stress conditions, like hypoxia and anoxia, it also protects cells against reactive oxygen species thanks to its pseudoperoxidase activity. This chain is Myoglobin (mb), found in Notothenia neglecta (Yellowbelly rockcod).